The primary structure comprises 372 residues: Probable peptidoglycan glycosyltransferase FtsW (372 aa).

Residues 1 to 12 are Cytoplasmic-facing; that stretch reads MQKKSTISWSYD. A helical transmembrane segment spans residues 13–33; the sequence is AWIVICTLSLLALGLLMVASA. Topologically, residues 34-45 are periplasmic; the sequence is SMVISDRQFGYP. A helical membrane pass occupies residues 46 to 66; sequence FHYFIRHLIYLSLGLTLAWVA. At 67–77 the chain is on the cytoplasmic side; that stretch reads SRVPIKVWKTY. Residues 78-98 form a helical membrane-spanning segment; the sequence is SGYLFLVGFLLLILVLAPVIG. Residues 99–109 are Periplasmic-facing; it reads KTVNGSRRWIQ. The chain crosses the membrane as a helical span at residues 110–130; it reads LGFISLQVSEVVKFVTILYLA. Topologically, residues 131–142 are cytoplasmic; it reads SFLQRYQSEVQK. A helical membrane pass occupies residues 143 to 163; sequence ELKGFLKPMLLVGILSGLLLL. At 164 to 165 the chain is on the periplasmic side; the sequence is EP. Residues 166-186 traverse the membrane as a helical segment; sequence DFGAAVVITMTCLALLFLAGV. A topological domain (cytoplasmic) is located at residue R187. A helical transmembrane segment spans residues 188-208; sequence LWPFCVLLVLVAGSLILLAIL. The Periplasmic segment spans residues 209–277; it reads SPYRLQRLTS…LFAVLAEELG (69 aa). The helical transmembrane segment at 278–298 threads the bilayer; it reads LIGEILLMGLFVLLIGRIILI. Residues 299–315 lie on the Cytoplasmic side of the membrane; sequence GRRAENSNQLYSAYLAY. Residues 316 to 336 form a helical membrane-spanning segment; that stretch reads GIALWLGLQVIINIGVTAGVL. At 337 to 342 the chain is on the periplasmic side; that stretch reads PTKGLT. The helical transmembrane segment at 343–363 threads the bilayer; sequence LPFISYGGSSLLMNCLAIGVI. The Cytoplasmic segment spans residues 364–372; it reads LRIAYETEN.

Belongs to the SEDS family. FtsW subfamily.

Its subcellular location is the cell inner membrane. It carries out the reaction [GlcNAc-(1-&gt;4)-Mur2Ac(oyl-L-Ala-gamma-D-Glu-L-Lys-D-Ala-D-Ala)](n)-di-trans,octa-cis-undecaprenyl diphosphate + beta-D-GlcNAc-(1-&gt;4)-Mur2Ac(oyl-L-Ala-gamma-D-Glu-L-Lys-D-Ala-D-Ala)-di-trans,octa-cis-undecaprenyl diphosphate = [GlcNAc-(1-&gt;4)-Mur2Ac(oyl-L-Ala-gamma-D-Glu-L-Lys-D-Ala-D-Ala)](n+1)-di-trans,octa-cis-undecaprenyl diphosphate + di-trans,octa-cis-undecaprenyl diphosphate + H(+). Its pathway is cell wall biogenesis; peptidoglycan biosynthesis. Peptidoglycan polymerase that is essential for cell division. In Coxiella burnetii (strain RSA 493 / Nine Mile phase I), this protein is Probable peptidoglycan glycosyltransferase FtsW.